A 190-amino-acid polypeptide reads, in one-letter code: CD70 antigen (190 aa).

The Cytoplasmic segment spans residues 1–17; the sequence is MEEEGSGCNVPRLPWAS. Residues 18-38 form a helical membrane-spanning segment; the sequence is ILRAALLLLLIGMVIYCFLCG. The Extracellular segment spans residues 39–190; the sequence is QRFTQQQLDS…TFFGVQLVRP (152 aa). The THD domain occupies 52 to 188; sequence DLAELLLNHT…DETFFGVQLV (137 aa). N-linked (GlcNAc...) asparagine glycosylation is found at Asn-59 and Asn-110. Cystine bridges form between Cys-111/Cys-148 and Cys-130/Cys-165. Asn-167 carries an N-linked (GlcNAc...) asparagine glycan.

Belongs to the tumor necrosis factor family. Homotrimer. Post-translationally, N-glycosylated.

Its subcellular location is the cell membrane. Expressed at the plasma membrane of B cells, it is the ligand of the CD27 receptor which is specifically expressed at the surface of T cells. The CD70-CD27 signaling pathway mediates antigen-specific T cell activation and expansion which in turn provides immune surveillance of B cells. The polypeptide is CD70 antigen (Sus scrofa (Pig)).